A 1311-amino-acid polypeptide reads, in one-letter code: Nephrocystin-3 (1311 aa).

Residues 81–183 (SKNNEIASMQ…LQRLQAQGIQ (103 aa)) are a coiled coil. TPR repeat units lie at residues 889-923 (LSYW…EEKM), 927-960 (ADLY…RETA), 969-1002 (AQSL…SENA), 1011-1044 (AREL…RQKS), 1077-1110 (ARTL…RERV), 1119-1152 (AQSI…RRRA), 1161-1194 (AYTV…RQKS), 1203-1236 (ATAL…YEDS), and 1245-1278 (GETL…KETE).

It localises to the cell projection. The protein resides in the cilium. In terms of biological role, required for normal ciliary development and function. Inhibits disheveled-1-induced canonical Wnt-signaling activity and may also play a role in the control of non-canonical Wnt signaling that regulates planar cell polarity. Probably acts as a molecular switch between different Wnt signaling pathways. Required for proper convergent extension cell movements. This is Nephrocystin-3 (nphp3) from Xenopus tropicalis (Western clawed frog).